Here is a 302-residue protein sequence, read N- to C-terminus: Short-chain dehydrogenase/reductase 1 (302 aa).

NADP(+) is bound by residues 20 to 23 (NKGL), arginine 43, 71 to 72 (DV), and asparagine 98. Residue serine 170 participates in substrate binding. Residues tyrosine 226, lysine 230, and 257 to 262 (VKTDIN) each bind NADP(+). The Proton acceptor role is filled by tyrosine 226.

This sequence belongs to the short-chain dehydrogenases/reductases (SDR) family. In terms of tissue distribution, mainly expressed in flowers and flower buds, to a lesser extent in leaves and, at low levels, in stems and roots.

It functions in the pathway secondary metabolite biosynthesis; terpenoid biosynthesis. In terms of biological role, component of the oleanane-type triterpene saponins (e.g. saponarioside A and saponarioside B) biosynthetic pathway, leading to the production of natural products with detergent properties used as traditional sources of soap. A dehydrogenase/reductase that, together with UGT74CD1, mediates the conversion of QA-tri to QA-triF; UGT74CD1 may transfer 4-keto-6-deoxy-glucose to QA-tri, which is in turn reduced to D-fucose by SDR1, thus leading to QA-triF formation via the initiation of the C-28 sugar chain. This chain is Short-chain dehydrogenase/reductase 1, found in Saponaria officinalis (Common soapwort).